The sequence spans 74 residues: Bacteriocin hiracin-JM79 (74 aa).

Residues 1-30 (MKKKVLKHCVILGILGTCLAGIGTGIKVDA) form the signal peptide.

The protein localises to the secreted. In terms of biological role, bacteriocin with antibacterial activity against the Gram-positive Listeria, Enterococcus, Propionibacterium, Staphylococcus and some strains of Clostridium, Lactobacillus and Pediococcus. Lacks antibacterial activity against Gram-negative bacteria. The sequence is that of Bacteriocin hiracin-JM79 from Enterococcus hirae.